Here is a 101-residue protein sequence, read N- to C-terminus: Urease subunit gamma (101 aa).

It belongs to the urease gamma subunit family. As to quaternary structure, heterotrimer of UreA (gamma), UreB (beta) and UreC (alpha) subunits. Three heterotrimers associate to form the active enzyme.

The protein localises to the cytoplasm. The catalysed reaction is urea + 2 H2O + H(+) = hydrogencarbonate + 2 NH4(+). It functions in the pathway nitrogen metabolism; urea degradation; CO(2) and NH(3) from urea (urease route): step 1/1. In Geobacillus kaustophilus (strain HTA426), this protein is Urease subunit gamma.